A 383-amino-acid polypeptide reads, in one-letter code: Acetylornithine deacetylase (383 aa).

His-80 contributes to the Zn(2+) binding site. The active site involves Asp-82. Asp-112 lines the Zn(2+) pocket. The active site involves Glu-144. Glu-145, Glu-169, and His-355 together coordinate Zn(2+).

Belongs to the peptidase M20A family. ArgE subfamily. In terms of assembly, homodimer. Requires Zn(2+) as cofactor. Co(2+) serves as cofactor. It depends on glutathione as a cofactor.

The protein resides in the cytoplasm. It carries out the reaction N(2)-acetyl-L-ornithine + H2O = L-ornithine + acetate. It functions in the pathway amino-acid biosynthesis; L-arginine biosynthesis; L-ornithine from N(2)-acetyl-L-ornithine (linear): step 1/1. Its function is as follows. Catalyzes the hydrolysis of the amide bond of N(2)-acetylated L-amino acids. Cleaves the acetyl group from N-acetyl-L-ornithine to form L-ornithine, an intermediate in L-arginine biosynthesis pathway, and a branchpoint in the synthesis of polyamines. In Erwinia tasmaniensis (strain DSM 17950 / CFBP 7177 / CIP 109463 / NCPPB 4357 / Et1/99), this protein is Acetylornithine deacetylase.